The chain runs to 542 residues: CTP synthase (542 aa).

Positions 1–265 (MARYVFITGG…DSEVLCAFGI (265 aa)) are amidoligase domain. S13 contributes to the CTP binding site. S13 contributes to the UTP binding site. 14–19 (SLGKGI) is a binding site for ATP. Residue Y54 coordinates L-glutamine. Residue D71 coordinates ATP. Mg(2+)-binding residues include D71 and E139. CTP-binding positions include 146–148 (DIE), 186–191 (KTKPTQ), and K222. Residues 186-191 (KTKPTQ) and K222 contribute to the UTP site. The Glutamine amidotransferase type-1 domain maps to 291–541 (TIAVVGKYTG…IEAAVEQSRL (251 aa)). A353 contributes to the L-glutamine binding site. Residue C380 is the Nucleophile; for glutamine hydrolysis of the active site. Residues 381–384 (FGMQ), E404, and R469 contribute to the L-glutamine site. Residues H514 and E516 contribute to the active site.

This sequence belongs to the CTP synthase family. As to quaternary structure, homotetramer.

It carries out the reaction UTP + L-glutamine + ATP + H2O = CTP + L-glutamate + ADP + phosphate + 2 H(+). The enzyme catalyses L-glutamine + H2O = L-glutamate + NH4(+). It catalyses the reaction UTP + NH4(+) + ATP = CTP + ADP + phosphate + 2 H(+). It functions in the pathway pyrimidine metabolism; CTP biosynthesis via de novo pathway; CTP from UDP: step 2/2. With respect to regulation, allosterically activated by GTP, when glutamine is the substrate; GTP has no effect on the reaction when ammonia is the substrate. The allosteric effector GTP functions by stabilizing the protein conformation that binds the tetrahedral intermediate(s) formed during glutamine hydrolysis. Inhibited by the product CTP, via allosteric rather than competitive inhibition. Catalyzes the ATP-dependent amination of UTP to CTP with either L-glutamine or ammonia as the source of nitrogen. Regulates intracellular CTP levels through interactions with the four ribonucleotide triphosphates. The sequence is that of CTP synthase from Bartonella tribocorum (strain CIP 105476 / IBS 506).